Here is a 347-residue protein sequence, read N- to C-terminus: D-alanine--D-alanine ligase (347 aa).

Positions 138–339 (KILCSHAGIP…YSQVIETILA (202 aa)) constitute an ATP-grasp domain. 171–226 (SDRFTFPLFVKPVDAGSSFGCTFVDFFEQLPVAIEHALQHGKSAIVEPALDAPEVF) provides a ligand contact to ATP. Mg(2+) is bound by residues aspartate 296, glutamate 308, and asparagine 310.

This sequence belongs to the D-alanine--D-alanine ligase family. Mg(2+) is required as a cofactor. The cofactor is Mn(2+).

It is found in the cytoplasm. It catalyses the reaction 2 D-alanine + ATP = D-alanyl-D-alanine + ADP + phosphate + H(+). It participates in cell wall biogenesis; peptidoglycan biosynthesis. Functionally, cell wall formation. This Tropheryma whipplei (strain TW08/27) (Whipple's bacillus) protein is D-alanine--D-alanine ligase.